The sequence spans 556 residues: 2-succinyl-5-enolpyruvyl-6-hydroxy-3-cyclohexene-1-carboxylate synthase (556 aa).

It belongs to the TPP enzyme family. MenD subfamily. Homodimer. It depends on Mg(2+) as a cofactor. Mn(2+) is required as a cofactor. The cofactor is thiamine diphosphate.

It catalyses the reaction isochorismate + 2-oxoglutarate + H(+) = 5-enolpyruvoyl-6-hydroxy-2-succinyl-cyclohex-3-ene-1-carboxylate + CO2. Its pathway is quinol/quinone metabolism; 1,4-dihydroxy-2-naphthoate biosynthesis; 1,4-dihydroxy-2-naphthoate from chorismate: step 2/7. It participates in quinol/quinone metabolism; menaquinone biosynthesis. Its function is as follows. Catalyzes the thiamine diphosphate-dependent decarboxylation of 2-oxoglutarate and the subsequent addition of the resulting succinic semialdehyde-thiamine pyrophosphate anion to isochorismate to yield 2-succinyl-5-enolpyruvyl-6-hydroxy-3-cyclohexene-1-carboxylate (SEPHCHC). This Staphylococcus epidermidis (strain ATCC 35984 / DSM 28319 / BCRC 17069 / CCUG 31568 / BM 3577 / RP62A) protein is 2-succinyl-5-enolpyruvyl-6-hydroxy-3-cyclohexene-1-carboxylate synthase.